The primary structure comprises 494 residues: Cytochrome P450 2B11 (494 aa).

Ser128 carries the post-translational modification Phosphoserine; by PKA. Residue Cys436 participates in heme binding.

The protein belongs to the cytochrome P450 family. Heme serves as cofactor.

Its subcellular location is the endoplasmic reticulum membrane. The protein localises to the microsome membrane. The enzyme catalyses an organic molecule + reduced [NADPH--hemoprotein reductase] + O2 = an alcohol + oxidized [NADPH--hemoprotein reductase] + H2O + H(+). In terms of biological role, cytochromes P450 are a group of heme-thiolate monooxygenases. In liver microsomes, this enzyme is involved in an NADPH-dependent electron transport pathway. This isozyme seems responsible for metabolism of 2,2',4,4',5,5'-hexachlorobiphenyl. The protein is Cytochrome P450 2B11 (CYP2B11) of Canis lupus familiaris (Dog).